Reading from the N-terminus, the 371-residue chain is Ferrochelatase (371 aa).

His218 and Glu299 together coordinate Fe cation.

It belongs to the ferrochelatase family.

The protein resides in the cytoplasm. It catalyses the reaction heme b + 2 H(+) = protoporphyrin IX + Fe(2+). Its pathway is porphyrin-containing compound metabolism; protoheme biosynthesis; protoheme from protoporphyrin-IX: step 1/1. Functionally, catalyzes the ferrous insertion into protoporphyrin IX. The chain is Ferrochelatase from Cupriavidus metallidurans (strain ATCC 43123 / DSM 2839 / NBRC 102507 / CH34) (Ralstonia metallidurans).